Here is a 367-residue protein sequence, read N- to C-terminus: Spore wall protein 9 (367 aa).

The N-terminal stretch at Met-1–Ala-29 is a signal peptide.

As to quaternary structure, interacts with SWP7.

It localises to the cytoplasm. Its subcellular location is the spore wall. The protein resides in the spore polar tube. Functionally, involved in adherence of spores to the host cell surface and in infection efficiency. This Nosema bombycis (strain CQ1 / CVCC 102059) (Microsporidian parasite) protein is Spore wall protein 9.